The following is a 315-amino-acid chain: Ribosomal RNA small subunit methyltransferase H (315 aa).

S-adenosyl-L-methionine contacts are provided by residues 37-39, Asp-57, Phe-83, Asp-105, and Gln-112; that span reads GGH.

This sequence belongs to the methyltransferase superfamily. RsmH family.

It is found in the cytoplasm. It catalyses the reaction cytidine(1402) in 16S rRNA + S-adenosyl-L-methionine = N(4)-methylcytidine(1402) in 16S rRNA + S-adenosyl-L-homocysteine + H(+). In terms of biological role, specifically methylates the N4 position of cytidine in position 1402 (C1402) of 16S rRNA. This is Ribosomal RNA small subunit methyltransferase H from Pseudomonas putida (strain GB-1).